The chain runs to 82 residues: Small ribosomal subunit protein uS17 (82 aa).

The protein belongs to the universal ribosomal protein uS17 family. In terms of assembly, part of the 30S ribosomal subunit.

Functionally, one of the primary rRNA binding proteins, it binds specifically to the 5'-end of 16S ribosomal RNA. This Shewanella pealeana (strain ATCC 700345 / ANG-SQ1) protein is Small ribosomal subunit protein uS17.